A 1485-amino-acid polypeptide reads, in one-letter code: Chromosome partition protein MukB (1485 aa).

34-41 (GGNGAGKS) lines the ATP pocket. Coiled coils occupy residues 337 to 480 (LNLV…QAYQ) and 509 to 605 (QHLA…PVWL). A flexible hinge region spans residues 666–783 (PSGAEDARLI…EVPLFGRAAR (118 aa)). Coiled-coil stretches lie at residues 835-915 (EAEI…IQQH) and 977-1116 (GMLT…AKAG).

The protein belongs to the SMC family. MukB subfamily. As to quaternary structure, homodimerization via its hinge domain. Binds to DNA via its C-terminal region. Interacts, and probably forms a ternary complex, with MukE and MukF via its C-terminal region. The complex formation is stimulated by calcium or magnesium. Interacts with tubulin-related protein FtsZ.

The protein localises to the cytoplasm. The protein resides in the nucleoid. Plays a central role in chromosome condensation, segregation and cell cycle progression. Functions as a homodimer, which is essential for chromosome partition. Involved in negative DNA supercoiling in vivo, and by this means organize and compact chromosomes. May achieve or facilitate chromosome segregation by condensation DNA from both sides of a centrally located replisome during cell division. This Yersinia pseudotuberculosis serotype O:3 (strain YPIII) protein is Chromosome partition protein MukB.